The following is a 496-amino-acid chain: Glycerol kinase (496 aa).

T12 lines the ADP pocket. Positions 12, 13, and 14 each coordinate ATP. Position 12 (T12) interacts with sn-glycerol 3-phosphate. R16 provides a ligand contact to ADP. 4 residues coordinate sn-glycerol 3-phosphate: R82, E83, Y134, and D244. Glycerol is bound by residues R82, E83, Y134, D244, and Q245. 2 residues coordinate ADP: T266 and G309. Positions 266, 309, 313, and 410 each coordinate ATP. Residues G410 and N414 each contribute to the ADP site.

This sequence belongs to the FGGY kinase family.

It catalyses the reaction glycerol + ATP = sn-glycerol 3-phosphate + ADP + H(+). It functions in the pathway polyol metabolism; glycerol degradation via glycerol kinase pathway; sn-glycerol 3-phosphate from glycerol: step 1/1. With respect to regulation, inhibited by fructose 1,6-bisphosphate (FBP). Its function is as follows. Key enzyme in the regulation of glycerol uptake and metabolism. Catalyzes the phosphorylation of glycerol to yield sn-glycerol 3-phosphate. This Treponema denticola (strain ATCC 35405 / DSM 14222 / CIP 103919 / JCM 8153 / KCTC 15104) protein is Glycerol kinase.